The following is a 187-amino-acid chain: Pyridoxal 5'-phosphate synthase subunit PdxT (187 aa).

47–49 (GES) is a binding site for L-glutamine. C76 serves as the catalytic Nucleophile. L-glutamine is bound by residues R102 and 128–129 (IR). Catalysis depends on charge relay system residues H165 and E167.

This sequence belongs to the glutaminase PdxT/SNO family. In terms of assembly, in the presence of PdxS, forms a dodecamer of heterodimers. Only shows activity in the heterodimer.

It catalyses the reaction aldehydo-D-ribose 5-phosphate + D-glyceraldehyde 3-phosphate + L-glutamine = pyridoxal 5'-phosphate + L-glutamate + phosphate + 3 H2O + H(+). The enzyme catalyses L-glutamine + H2O = L-glutamate + NH4(+). Its pathway is cofactor biosynthesis; pyridoxal 5'-phosphate biosynthesis. Its function is as follows. Catalyzes the hydrolysis of glutamine to glutamate and ammonia as part of the biosynthesis of pyridoxal 5'-phosphate. The resulting ammonia molecule is channeled to the active site of PdxS. This is Pyridoxal 5'-phosphate synthase subunit PdxT from Methanococcus vannielii (strain ATCC 35089 / DSM 1224 / JCM 13029 / OCM 148 / SB).